A 248-amino-acid polypeptide reads, in one-letter code: Tyrosine recombinase XerD-like (248 aa).

The region spanning 1 to 72 (MKSYIEPFIA…TANQFLYYLY (72 aa)) is the Core-binding (CB) domain. The Tyr recombinase domain maps to 85 to 248 (DTMKVMRTEK…PVTLEKYYKS (164 aa)). Catalysis depends on residues Lys149 and Arg213. The active-site O-(3'-phospho-DNA)-tyrosine intermediate is the Tyr245.

The protein belongs to the 'phage' integrase family. XerD-like subfamily.

The protein resides in the cytoplasm. Putative tyrosine recombinase. Not involved in the cutting and rejoining of the recombining DNA molecules on dif(SL) site. This chain is Tyrosine recombinase XerD-like, found in Streptococcus pyogenes serotype M18 (strain MGAS8232).